The chain runs to 367 residues: MGSGYQLLQLPRERFRKTSFLVWVIILFQRAISMPLGIVTNSTLKATEIDQLVCRDKLSSTSQLKSVGLNLEGNGIATDVPSATKRWGFRSGVPPKVVSYEAGEWAENCYNLEIKKSDGSECLPLPPDGVRGFPRCRYVHKVQGTGPCPGDLAFHKNGAFFLYDRLASTVIYRGTTFTEGVVAFLILSEPKKHFWKATPAHEPVNTTDDSTSYYMTLTLSYEMSNFGGKESNTLFKVDNHTYVQLDRPHTPQFLVQLNETLRRNNRLSNSTGRLTWTLDPKIEPDVGEWAFWETKKTFPNNFMEKTCISKFYQPTPTTPQIRARRELSKEKLATTHPPTTPSWFQRIPLQWFQCSLQDGQRKCRPKV.

The first 33 residues, Met-1–Ser-33, serve as a signal peptide directing secretion. Asn-41 is a glycosylation site (N-linked (GlcNAc...) asparagine; by host). Intrachain disulfides connect Cys-109–Cys-136 and Cys-122–Cys-148. Residues Asn-205, Asn-239, Asn-258, and Asn-269 are each glycosylated (N-linked (GlcNAc...) asparagine; by host).

This sequence belongs to the filoviruses glycoprotein family. As to quaternary structure, homodimer; disulfide-linked. The homodimers are linked by two disulfide bonds in a parallel orientation. Monomer. In terms of processing, this precursor is processed into mature sGP and delta-peptide by host furin or furin-like proteases. The cleavage site corresponds to the furin optimal cleavage sequence [KR]-X-[KR]-R. Post-translationally, N-glycosylated. O-glycosylated.

It localises to the secreted. In terms of biological role, seems to possess an anti-inflammatory activity as it can reverse the barrier-decreasing effects of TNF alpha. Might therefore contribute to the lack of inflammatory reaction seen during infection in spite the of extensive necrosis and massive virus production. Does not seem to be involved in activation of primary macrophages. Does not seem to interact specifically with neutrophils. Its function is as follows. Viroporin that permeabilizes mammalian cell plasma membranes. It acts by altering permeation of ionic compounds and small molecules. This activity may lead to viral enterotoxic activity. The polypeptide is Pre-small/secreted glycoprotein (GP) (Reston ebolavirus (strain Siena/Philippine-92) (REBOV)).